Consider the following 98-residue polypeptide: NADH-ubiquinone oxidoreductase chain 4L (98 aa).

3 consecutive transmembrane segments (helical) span residues 2 to 22, 29 to 49, and 61 to 81; these read SLVY…LLMF, SLLC…ILIL, and IIML…LVMV.

The protein belongs to the complex I subunit 4L family. In terms of assembly, core subunit of respiratory chain NADH dehydrogenase (Complex I) which is composed of 45 different subunits.

It is found in the mitochondrion inner membrane. The enzyme catalyses a ubiquinone + NADH + 5 H(+)(in) = a ubiquinol + NAD(+) + 4 H(+)(out). Core subunit of the mitochondrial membrane respiratory chain NADH dehydrogenase (Complex I) which catalyzes electron transfer from NADH through the respiratory chain, using ubiquinone as an electron acceptor. Part of the enzyme membrane arm which is embedded in the lipid bilayer and involved in proton translocation. The protein is NADH-ubiquinone oxidoreductase chain 4L (MT-ND4L) of Galemys pyrenaicus (Iberian desman).